The primary structure comprises 353 residues: Protein-glutamate methylesterase/protein-glutamine glutaminase 3 (353 aa).

The region spanning 3–120 is the Response regulatory domain; sequence KVLIADDSAL…SSSSDMKKVA (118 aa). Aspartate 54 bears the 4-aspartylphosphate mark. A CheB-type methylesterase domain is found at 158 to 353; sequence PRPGREVTKA…AREIIRAVNR (196 aa). Residues serine 173, histidine 200, and aspartate 296 contribute to the active site.

The protein belongs to the CheB family. Post-translationally, phosphorylated by CheA. Phosphorylation of the N-terminal regulatory domain activates the methylesterase activity.

Its subcellular location is the cytoplasm. It carries out the reaction [protein]-L-glutamate 5-O-methyl ester + H2O = L-glutamyl-[protein] + methanol + H(+). It catalyses the reaction L-glutaminyl-[protein] + H2O = L-glutamyl-[protein] + NH4(+). In terms of biological role, involved in chemotaxis. Part of a chemotaxis signal transduction system that modulates chemotaxis in response to various stimuli. Catalyzes the demethylation of specific methylglutamate residues introduced into the chemoreceptors (methyl-accepting chemotaxis proteins or MCP) by CheR. Also mediates the irreversible deamidation of specific glutamine residues to glutamic acid. In Syntrophomonas wolfei subsp. wolfei (strain DSM 2245B / Goettingen), this protein is Protein-glutamate methylesterase/protein-glutamine glutaminase 3.